A 23-amino-acid chain; its full sequence is Unknown protein 1 (23 aa).

The chain is Unknown protein 1 from Coniferiporia sulphurascens (Laminated root rot fungus).